We begin with the raw amino-acid sequence, 312 residues long: MKKLNIVFAGTPDISAQVLKDLYQSQHNIQAVLTQPDRAKGRGKKIQFSPVKEVAIANNTLVLQPLSFKKDPQVLEQIRELKPDVIVVIAYGIIVPQEFLDIPKYGCLNIHVSLLPKWRGAAPIQRAIQAGDSKTGICIMQMDAGLDTGDILNTLEVEIQDTDTSQSLHDKFAKLSIKPLLETLENIDTIKPQPQQGEPTYAHKITKQEGLIDFTKSAKEISCHIRAFTPWPSAFFMLEGEQVKVGDFEILEKSANDEVTAIIDITKNGFDIATNDKIIRFKQLQFPNKKMLNIADILNGKDLDKYIGYKIG.

113–116 (SLLP) contacts (6S)-5,6,7,8-tetrahydrofolate.

This sequence belongs to the Fmt family.

The enzyme catalyses L-methionyl-tRNA(fMet) + (6R)-10-formyltetrahydrofolate = N-formyl-L-methionyl-tRNA(fMet) + (6S)-5,6,7,8-tetrahydrofolate + H(+). Attaches a formyl group to the free amino group of methionyl-tRNA(fMet). The formyl group appears to play a dual role in the initiator identity of N-formylmethionyl-tRNA by promoting its recognition by IF2 and preventing the misappropriation of this tRNA by the elongation apparatus. The chain is Methionyl-tRNA formyltransferase from Francisella philomiragia subsp. philomiragia (strain ATCC 25017 / CCUG 19701 / FSC 153 / O#319-036).